The primary structure comprises 526 residues: Cytochrome P450 monooxygenase ucsK (526 aa).

A helical membrane pass occupies residues P7 to Y27. N-linked (GlcNAc...) asparagine glycosylation is present at N403. C467 is a binding site for heme.

The protein belongs to the cytochrome P450 family. Heme is required as a cofactor.

The protein resides in the membrane. The protein operates within mycotoxin biosynthesis. Its function is as follows. Cytochrome P450 monooxygenase; part of the gene cluster that mediates the biosynthesis of UCS1025A, a member of the pyrrolizidinone family that acts as a strong telomerase inhibitor and displays potent antibacterial and antitumor properties. These compounds share a hemiaminal-containing pyrrolizidinone core fused with a gamma-lactone, giving a furopyrrolizidine that is connected to a decalin fragment. The polyketide synthase module (PKS) of the PKS-NRPS ucsA is responsible for the synthesis of the polyketide backbone via the condensation of an acetyl-CoA starter unit with 6 malonyl-CoA units. The downstream nonribosomal peptide synthetase (NRPS) module then amidates the carboxyl end of the polyketide with a 2S,3S-methylproline derived from L-isoleucine by the 2-oxoglutarate-dependent dioxygenase ucsF which converts L-isoleucine to (4S,5S)-4-methylpyrroline-5-carboxylate that is further converted to 2S,3S-methylproline by the pyrroline-5-carboxylate reductase ucsG. Reductive release of the completed aminoacyl polyketide from the assembly line can form the 3-pyrrolin-2-one structure via an intramolecular Knoevenagel reaction. Because ucsA lacks a designated enoylreductase (ER) domain, the required activity is provided the enoyl reductase ucsL. This keto acyclic precursor is the substrate of the Diels-Alderase ucsH, that catalyzes the Diels-Alder cycloaddition. Oxidation of the 3S-methyl group to a carboxylate by the cytochrome P450 monooxygenase ucsK allows an oxa-Michael cyclization that might involve the reductase/dehydrogenase ucsI and which furnishes the furopyrrolizidine. The oxidase ucsJ likely plays a critical role in stereoselective reduction of the C5-C6 double bond to afford the required R-configured carboxylate group. Further enolization and oxidation at C5 by an unidentified enzyme affords the last intermediate that can undergo oxa-Michael cyclization to yield UCS1025A. The protein is Cytochrome P450 monooxygenase ucsK of Acremonium sp.